We begin with the raw amino-acid sequence, 703 residues long: Fanconi-associated nuclease 1 homolog (703 aa).

Mn(2+) contacts are provided by glutamate 529, aspartate 651, glutamate 666, and valine 667. The 102-residue stretch at tyrosine 597–serine 698 folds into the VRR-NUC domain.

It belongs to the FAN1 family. Mn(2+) is required as a cofactor. It depends on Mg(2+) as a cofactor.

It localises to the nucleus. It catalyses the reaction Hydrolytically removes 5'-nucleotides successively from the 3'-hydroxy termini of 3'-hydroxy-terminated oligonucleotides.. Its function is as follows. Nuclease required for the repair of DNA interstrand cross-links (ICL). Acts as a 5'-3' exonuclease that anchors at a cut end of DNA and cleaves DNA successively at every third nucleotide, allowing to excise an ICL from one strand through flanking incisions. The protein is Fanconi-associated nuclease 1 homolog of Schizosaccharomyces pombe (strain 972 / ATCC 24843) (Fission yeast).